A 322-amino-acid polypeptide reads, in one-letter code: Hapalindole dimethylallyltransferase (322 aa).

Residues R46, R60, K115, N166, Y168, R221, Y225, and K275 each contribute to the dimethylallyl diphosphate site.

Belongs to the aromatic prenyltransferase family.

It carries out the reaction hapalindole G + dimethylallyl diphosphate = ambiguine A + diphosphate. The enzyme catalyses hapalindole U + dimethylallyl diphosphate + H(+) = ambiguine H + diphosphate. Activity is slightly increased in the presence of Mg(2+). Prenyltransferase involved in the biosynthesis of ambiguines, a family of hapalindole-type alkaloids. Catalyzes the reverse prenylation of hapalindole G or U at the C2 position with dimethylallyl diphosphate (DMAPP) to generate ambiguine A or H, respectively. In addition, accepts hapalindole A, an epimer of hapalindole G, and catalyzes normal prenylation at its C2 position. This chain is Hapalindole dimethylallyltransferase, found in Fischerella ambigua (strain UTEX 1903).